A 146-amino-acid polypeptide reads, in one-letter code: Hemoglobin subunit beta (146 aa).

N-acetylvaline is present on V1. In terms of domain architecture, Globin spans 2 to 146 (HLTADEKVSL…VANALAHKYH (145 aa)). S44 carries the phosphoserine modification. K59 bears the N6-acetyllysine mark. H63 contributes to the heme b binding site. Residue K82 is modified to N6-acetyllysine. Residue H92 participates in heme b binding. S-nitrosocysteine is present on C93. An N6-acetyllysine modification is found at K144.

The protein belongs to the globin family. In terms of assembly, heterotetramer of two alpha chains and two beta chains. Red blood cells.

Involved in oxygen transport from the lung to the various peripheral tissues. The polypeptide is Hemoglobin subunit beta (Tamias striatus (Eastern chipmunk)).